The sequence spans 643 residues: Threonine--tRNA ligase (643 aa).

The TGS domain occupies 1-61 (MPIITLPDGS…EQDATLEIIT (61 aa)). A catalytic region spans residues 243–534 (DHRKIGKALD…ITEEYAGFFP (292 aa)). Zn(2+) is bound by residues cysteine 334, histidine 385, and histidine 511.

This sequence belongs to the class-II aminoacyl-tRNA synthetase family. Homodimer. Zn(2+) is required as a cofactor.

It is found in the cytoplasm. It catalyses the reaction tRNA(Thr) + L-threonine + ATP = L-threonyl-tRNA(Thr) + AMP + diphosphate + H(+). Catalyzes the attachment of threonine to tRNA(Thr) in a two-step reaction: L-threonine is first activated by ATP to form Thr-AMP and then transferred to the acceptor end of tRNA(Thr). Also edits incorrectly charged L-seryl-tRNA(Thr). This Haemophilus influenzae (strain PittGG) protein is Threonine--tRNA ligase.